The chain runs to 157 residues: uncharacterized protein (157 aa).

The helical transmembrane segment at 42–64 (SCIRLIVMFICVAMITCPNSLRF) threads the bilayer.

Its subcellular location is the membrane. This is an uncharacterized protein from Saccharomyces cerevisiae (strain ATCC 204508 / S288c) (Baker's yeast).